Reading from the N-terminus, the 760-residue chain is Catecholate siderophore receptor Fiu (760 aa).

An N-terminal signal peptide occupies residues M1–A31. The region spanning P67–K175 is the TBDR plug domain. The region spanning D180–F760 is the TBDR beta-barrel domain. Positions R743–F760 match the TonB C-terminal box motif.

The protein belongs to the TonB-dependent receptor family.

It is found in the cell outer membrane. Functionally, involved in the active transport across the outer membrane of iron complexed with catecholate siderophores such as dihydroxybenzoylserine and dihydroxybenzoate. It derives its energy for transport by interacting with the trans-periplasmic membrane protein TonB. Can also transport catechol-substituted cephalosporins. Receptor for microcins M, H47 and E492. The chain is Catecholate siderophore receptor Fiu (fiu) from Escherichia coli O6:H1 (strain CFT073 / ATCC 700928 / UPEC).